Reading from the N-terminus, the 858-residue chain is Leucine--tRNA ligase (858 aa).

The 'HIGH' region signature appears at 42-52; sequence PYPSGRLHMGH. The short motif at 618 to 622 is the 'KMSKS' region element; sequence KMSKS. Position 621 (K621) interacts with ATP.

This sequence belongs to the class-I aminoacyl-tRNA synthetase family.

The protein localises to the cytoplasm. The catalysed reaction is tRNA(Leu) + L-leucine + ATP = L-leucyl-tRNA(Leu) + AMP + diphosphate. This is Leucine--tRNA ligase from Aliivibrio fischeri (strain ATCC 700601 / ES114) (Vibrio fischeri).